A 308-amino-acid polypeptide reads, in one-letter code: D-alanine--D-alanine ligase (308 aa).

The ATP-grasp domain occupies 104 to 301 (KQIWQGSDLP…FDELCVAILD (198 aa)). Residue 130–185 (IAELGLPVIIKPVHEGSSVGMSKVEKAEDFAAAIEKATQHDAVVMAEKWITGREFT) coordinates ATP. Asp-255, Glu-268, and Asn-270 together coordinate Mg(2+).

It belongs to the D-alanine--D-alanine ligase family. The cofactor is Mg(2+). It depends on Mn(2+) as a cofactor.

It is found in the cytoplasm. The enzyme catalyses 2 D-alanine + ATP = D-alanyl-D-alanine + ADP + phosphate + H(+). Its pathway is cell wall biogenesis; peptidoglycan biosynthesis. Its function is as follows. Cell wall formation. In Acinetobacter baumannii (strain AB307-0294), this protein is D-alanine--D-alanine ligase.